Here is a 385-residue protein sequence, read N- to C-terminus: Chaperone protein DnaJ 2 (385 aa).

Positions 10 to 75 (DYYKELGVSS…AKRKEYDETR (66 aa)) constitute a J domain. Residues 155-233 (GVTVPLRMTS…CHGSGIQNRT (79 aa)) form a CR-type zinc finger. Residues Cys168, Cys171, Cys185, Cys188, Cys207, Cys210, Cys221, and Cys224 each contribute to the Zn(2+) site. 4 CXXCXGXG motif repeats span residues 168–175 (CTTCHGSG), 185–192 (CPICNGTG), 207–214 (CDGCRGTG), and 221–228 (CVDCHGSG).

The protein belongs to the DnaJ family. Homodimer. Zn(2+) serves as cofactor.

It is found in the cytoplasm. Its function is as follows. Participates actively in the response to hyperosmotic and heat shock by preventing the aggregation of stress-denatured proteins and by disaggregating proteins, also in an autonomous, DnaK-independent fashion. Unfolded proteins bind initially to DnaJ; upon interaction with the DnaJ-bound protein, DnaK hydrolyzes its bound ATP, resulting in the formation of a stable complex. GrpE releases ADP from DnaK; ATP binding to DnaK triggers the release of the substrate protein, thus completing the reaction cycle. Several rounds of ATP-dependent interactions between DnaJ, DnaK and GrpE are required for fully efficient folding. Also involved, together with DnaK and GrpE, in the DNA replication of plasmids through activation of initiation proteins. The sequence is that of Chaperone protein DnaJ 2 from Nocardia farcinica (strain IFM 10152).